The sequence spans 262 residues: uncharacterized protein (262 aa).

The next 7 helical transmembrane spans lie at 42 to 62 (IAKFNTIMYLVPYIITYTVLN), 71 to 91 (IINIVYLFVNVISGLFHLLYF), 115 to 135 (IGLAIVSFVYQLSMYIIMELI), 145 to 165 (VVSYLIKFIILTLYHSFCCFN), 185 to 205 (LWAYYLGYGTIASLMYIYSNH), 206 to 226 (PLMIYTYNIYMSILIILPFMI), and 235 to 255 (AYPSINLKIFSIIVGYFNYAI).

It localises to the membrane. This is an uncharacterized protein from Acanthamoeba polyphaga mimivirus (APMV).